The sequence spans 42 residues: Photosystem I reaction center subunit IX (42 aa).

A helical transmembrane segment spans residues 8-28; it reads YLSTIPVVGAIWLTFTAGFII.

The protein belongs to the PsaJ family.

The protein resides in the plastid. The protein localises to the chloroplast thylakoid membrane. May help in the organization of the PsaE and PsaF subunits. This Gracilaria tenuistipitata var. liui (Red alga) protein is Photosystem I reaction center subunit IX.